A 575-amino-acid chain; its full sequence is Pre-hexon-linking protein IIIa (575 aa).

Residues 1-95 are peripentonal hexon-tethering domain; the sequence is MTSSDTFLAL…DLLNRAYTWN (95 aa). Positions 129 to 243 are binding to hexon-linking protein; that stretch reads ANASLLTQFF…FYDYGAMEPG (115 aa). A Phosphoserine; by host modification is found at serine 497. Residues 515-575 constitute a propeptide that is removed on maturation; the sequence is GGPGFFASLR…SRRGRKLRFY (61 aa). The segment at 525–549 is disordered; sequence PSIGSRQPTGTAVGLRPTTPYSGSG.

The protein belongs to the adenoviridae hexon-linking protein IIIa family. As to quaternary structure, interacts with hexon proteins; this interaction tethers the peripentonal hexons to hexons situated in the facet. Interacts with the penton protein (via N-terminus). Interacts with packaging protein 3; this interaction is required to promote correct genome packaging. In terms of processing, cleaved near the C-terminus by the viral protease during virion maturation to form the mature protein.

The protein localises to the virion. It is found in the host nucleus. Structural component of the virion that acts as a cement protein on the capsid exterior which mediates the interactions between the hexons, including the peripentonal hexons, and reaches all the way to the penton vertices. Two hexon linking proteins IIIa, one from each facet, stabilize the unique edge interface between a pair of facets. As the virus enters the host cell, hexon linking proteins IIIa are shed concomitant with virion acidification in the endosome. During virus assembly, seems to play a role in the serotype specificity of the packaging of viral DNA via its interaction with packaging protein 3. The chain is Pre-hexon-linking protein IIIa from Galliformes (FAdV-1).